Here is a 424-residue protein sequence, read N- to C-terminus: ATP-citrate synthase alpha chain protein 3 (424 aa).

Residues Asn-343, Thr-345, and Arg-376 each coordinate citrate.

The protein belongs to the succinate/malate CoA ligase beta subunit family. Heterooctamer of 4 alpha and 4 beta chains.

The protein localises to the cytoplasm. It localises to the cytosol. It catalyses the reaction oxaloacetate + acetyl-CoA + ADP + phosphate = citrate + ATP + CoA. Its function is as follows. ATP citrate-lyase is the primary enzyme responsible for the synthesis of cytosolic acetyl-CoA, used for the elongation of fatty acids and biosynthesis of isoprenoids, flavonoids and malonated derivatives. May supply substrate to the cytosolic acetyl-CoA carboxylase, which generates the malonyl-CoA used for the synthesis of a multitude of compounds, including very long chain fatty acids and flavonoids. Required for normal growth and development and elongation of C18 fatty acids to C20 to C24 fatty acids in seeds. In contrast to all known animal ACL enzymes having a homomeric structure, plant ACLs are composed of alpha and beta chains. This Arabidopsis thaliana (Mouse-ear cress) protein is ATP-citrate synthase alpha chain protein 3 (ACLA-3).